A 267-amino-acid polypeptide reads, in one-letter code: Ribosomal RNA small subunit methyltransferase A (267 aa).

6 residues coordinate S-adenosyl-L-methionine: asparagine 18, leucine 20, glycine 45, glutamate 66, aspartate 91, and asparagine 112.

This sequence belongs to the class I-like SAM-binding methyltransferase superfamily. rRNA adenine N(6)-methyltransferase family. RsmA subfamily.

The protein localises to the cytoplasm. The enzyme catalyses adenosine(1518)/adenosine(1519) in 16S rRNA + 4 S-adenosyl-L-methionine = N(6)-dimethyladenosine(1518)/N(6)-dimethyladenosine(1519) in 16S rRNA + 4 S-adenosyl-L-homocysteine + 4 H(+). In terms of biological role, specifically dimethylates two adjacent adenosines (A1518 and A1519) in the loop of a conserved hairpin near the 3'-end of 16S rRNA in the 30S particle. May play a critical role in biogenesis of 30S subunits. The chain is Ribosomal RNA small subunit methyltransferase A from Shewanella pealeana (strain ATCC 700345 / ANG-SQ1).